Reading from the N-terminus, the 507-residue chain is Protein DETOXIFICATION 41 (507 aa).

The Cytoplasmic segment spans residues 1 to 62 (MSSTETYEPL…KLLWTLSGAS (62 aa)). The helical transmembrane segment at 63-83 (IVVSVLNYMLSFVTVMFTGHL) threads the bilayer. Topologically, residues 84–92 (GSLQLAGAS) are vacuolar. A helical membrane pass occupies residues 93 to 113 (IATVGIQGLAYGIMLGMASAV). At 114-137 (QTVCGQAYGARQYSSMGIICQRAM) the chain is on the cytoplasmic side. The chain crosses the membrane as a helical span at residues 138–158 (VLHLAAAVFLTFLYWYSGPIL). Residues 159–170 (KTMGQSVAIAHE) lie on the Vacuolar side of the membrane. The helical transmembrane segment at 171 to 191 (GQIFARGMIPQIYAFALACPM) threads the bilayer. The Cytoplasmic portion of the chain corresponds to 192–202 (QRFLQAQNIVN). The helical transmembrane segment at 203 to 223 (PLAYMSLGVFLLHTLLTWLVT) threads the bilayer. A topological domain (vacuolar) is located at residue N224. A helical membrane pass occupies residues 225 to 245 (VLDFGLLGAALILSFSWWLLV). Residues 246 to 283 (AVNGMYILMSPNCKETWTGFSTRAFRGIWPYFKLTVAS) lie on the Cytoplasmic side of the membrane. The chain crosses the membrane as a helical span at residues 284–304 (AVMLCLEIWYNQGLVIISGLL). The Vacuolar segment spans residues 305–312 (SNPTISLD). The helical transmembrane segment at 313 to 333 (AISICMYYLNWDMQFMLGLSA) threads the bilayer. The Cytoplasmic segment spans residues 334–355 (AISVRVSNELGAGNPRVAMLSV). Residues 356–376 (VVVNITTVLISSVLCVIVLVF) form a helical membrane-spanning segment. The Vacuolar segment spans residues 377–389 (RVGLSKAFTSDAE). A helical membrane pass occupies residues 390–410 (VIAAVSDLFPLLAVSIFLNGI). At 411-425 (QPILSGVAIGSGWQA) the chain is on the cytoplasmic side. The chain crosses the membrane as a helical span at residues 426-446 (VVAYVNLVTYYVIGLPIGCVL). The Vacuolar segment spans residues 447-453 (GFKTSLG). Residues 454-474 (VAGIWWGMIAGVILQTLTLIV) form a helical membrane-spanning segment. Topologically, residues 475-507 (LTLKTNWTSEVENAAQRVKTSATENQEMANAGV) are cytoplasmic.

Belongs to the multi antimicrobial extrusion (MATE) (TC 2.A.66.1) family. As to expression, expressed in reproductive tissues, from buds to siliques. Restricted to the endothelium layer of the ovule and the seed coat.

The protein resides in the vacuole membrane. The protein operates within secondary metabolite biosynthesis; flavonoid biosynthesis. Its function is as follows. Acts as a flavonoid/H(+)-antiporter that control the vacuolar sequestration of flavonoids in the seed coat endothelium. Could transport the anthocyanin cyanidin-3-O-glucoside and epicatechin 3'-O-glucoside in vitro. This Arabidopsis thaliana (Mouse-ear cress) protein is Protein DETOXIFICATION 41.